Consider the following 409-residue polypeptide: Peptidase T (409 aa).

Zn(2+) is bound at residue His78. Asp80 is an active-site residue. Position 141 (Asp141) interacts with Zn(2+). Residue Glu175 is the Proton acceptor of the active site. Zn(2+) contacts are provided by Glu176, Asp198, and His380.

Belongs to the peptidase M20B family. Zn(2+) serves as cofactor.

It is found in the cytoplasm. The catalysed reaction is Release of the N-terminal residue from a tripeptide.. Its function is as follows. Cleaves the N-terminal amino acid of tripeptides. The sequence is that of Peptidase T from Caldanaerobacter subterraneus subsp. tengcongensis (strain DSM 15242 / JCM 11007 / NBRC 100824 / MB4) (Thermoanaerobacter tengcongensis).